We begin with the raw amino-acid sequence, 526 residues long: Bifunctional purine biosynthesis protein PurH (526 aa).

Residues 1 to 145 (MSKAPLALLS…KNHAHVGIVT (145 aa)) form the MGS-like domain.

The protein belongs to the PurH family.

It catalyses the reaction (6R)-10-formyltetrahydrofolate + 5-amino-1-(5-phospho-beta-D-ribosyl)imidazole-4-carboxamide = 5-formamido-1-(5-phospho-D-ribosyl)imidazole-4-carboxamide + (6S)-5,6,7,8-tetrahydrofolate. The catalysed reaction is IMP + H2O = 5-formamido-1-(5-phospho-D-ribosyl)imidazole-4-carboxamide. It participates in purine metabolism; IMP biosynthesis via de novo pathway; 5-formamido-1-(5-phospho-D-ribosyl)imidazole-4-carboxamide from 5-amino-1-(5-phospho-D-ribosyl)imidazole-4-carboxamide (10-formyl THF route): step 1/1. Its pathway is purine metabolism; IMP biosynthesis via de novo pathway; IMP from 5-formamido-1-(5-phospho-D-ribosyl)imidazole-4-carboxamide: step 1/1. The protein is Bifunctional purine biosynthesis protein PurH of Psychrobacter arcticus (strain DSM 17307 / VKM B-2377 / 273-4).